Consider the following 121-residue polypeptide: Large ribosomal subunit protein bL19 (121 aa).

Belongs to the bacterial ribosomal protein bL19 family.

In terms of biological role, this protein is located at the 30S-50S ribosomal subunit interface and may play a role in the structure and function of the aminoacyl-tRNA binding site. The protein is Large ribosomal subunit protein bL19 of Gloeobacter violaceus (strain ATCC 29082 / PCC 7421).